Reading from the N-terminus, the 326-residue chain is 4-hydroxy-3-methylbut-2-enyl diphosphate reductase 1 (326 aa).

A [4Fe-4S] cluster-binding site is contributed by Cys-27. His-56 and His-89 together coordinate (2E)-4-hydroxy-3-methylbut-2-enyl diphosphate. Dimethylallyl diphosphate contacts are provided by His-56 and His-89. Isopentenyl diphosphate is bound by residues His-56 and His-89. Cys-111 contributes to the [4Fe-4S] cluster binding site. His-139 is a (2E)-4-hydroxy-3-methylbut-2-enyl diphosphate binding site. A dimethylallyl diphosphate-binding site is contributed by His-139. Isopentenyl diphosphate is bound at residue His-139. Glu-141 acts as the Proton donor in catalysis. Thr-179 provides a ligand contact to (2E)-4-hydroxy-3-methylbut-2-enyl diphosphate. Cys-209 contributes to the [4Fe-4S] cluster binding site. The (2E)-4-hydroxy-3-methylbut-2-enyl diphosphate site is built by Ser-237, Ser-238, Asn-239, and Ser-281. The dimethylallyl diphosphate site is built by Ser-237, Ser-238, Asn-239, and Ser-281. Residues Ser-237, Ser-238, Asn-239, and Ser-281 each coordinate isopentenyl diphosphate.

It belongs to the IspH family. Requires [4Fe-4S] cluster as cofactor.

The enzyme catalyses isopentenyl diphosphate + 2 oxidized [2Fe-2S]-[ferredoxin] + H2O = (2E)-4-hydroxy-3-methylbut-2-enyl diphosphate + 2 reduced [2Fe-2S]-[ferredoxin] + 2 H(+). It catalyses the reaction dimethylallyl diphosphate + 2 oxidized [2Fe-2S]-[ferredoxin] + H2O = (2E)-4-hydroxy-3-methylbut-2-enyl diphosphate + 2 reduced [2Fe-2S]-[ferredoxin] + 2 H(+). It participates in isoprenoid biosynthesis; dimethylallyl diphosphate biosynthesis; dimethylallyl diphosphate from (2E)-4-hydroxy-3-methylbutenyl diphosphate: step 1/1. It functions in the pathway isoprenoid biosynthesis; isopentenyl diphosphate biosynthesis via DXP pathway; isopentenyl diphosphate from 1-deoxy-D-xylulose 5-phosphate: step 6/6. In terms of biological role, catalyzes the conversion of 1-hydroxy-2-methyl-2-(E)-butenyl 4-diphosphate (HMBPP) into a mixture of isopentenyl diphosphate (IPP) and dimethylallyl diphosphate (DMAPP). Acts in the terminal step of the DOXP/MEP pathway for isoprenoid precursor biosynthesis. The polypeptide is 4-hydroxy-3-methylbut-2-enyl diphosphate reductase 1 (Burkholderia pseudomallei (strain K96243)).